The sequence spans 595 residues: Merlin (595 aa).

At Ser13 the chain carries Phosphoserine. In terms of domain architecture, FERM spans 22–311; the sequence is FTVRIVTMDA…GNHDLFMRRR (290 aa). Ser518 carries the post-translational modification Phosphoserine; by PAK.

As to quaternary structure, interacts with NHERF1, HGS and AGAP2. Interacts with LAYN. Interacts with SGSM3. Interacts (via FERM domain) with MPP1. Interacts with WWC1. Interacts with the CUL4A-RBX1-DDB1-VprBP/DCAF1 E3 ubiquitin-protein ligase complex. The unphosphorylated form interacts (via FERM domain) with VPRBP/DCAF1. Interacts (via FERM domain) with NOP53; the interaction is direct. Interacts with SCHIP1; the interaction is direct. In terms of processing, phosphorylation of Ser-518 inhibits nuclear localization by disrupting the intramolecular association of the FERM domain with the C-terminal tail. The dephosphorylation of Ser-518 favors the interaction with NOP53. Post-translationally, ubiquitinated by the CUL4A-RBX1-DDB1-DCAF1/VprBP E3 ubiquitin-protein ligase complex for ubiquitination and subsequent proteasome-dependent degradation. As to expression, widely expressed. Isoform 1 and isoform 3 are predominant. Isoform 4, isoform 5 and isoform 6 are expressed moderately. Isoform 8 is found at low frequency. Isoform 7, isoform 9 and isoform 10 are not expressed in adult tissues, with the exception of adult retina expressing isoform 10. Isoform 9 is faintly expressed in fetal brain, heart, lung, skeletal muscle and spleen. Fetal thymus expresses isoforms 1, 7, 9 and 10 at similar levels.

It localises to the cell projection. Its subcellular location is the filopodium membrane. It is found in the ruffle membrane. The protein resides in the nucleus. The protein localises to the cytoplasm. It localises to the perinuclear region. Its subcellular location is the cytoplasmic granule. It is found in the cytoskeleton. Its function is as follows. Probable regulator of the Hippo/SWH (Sav/Wts/Hpo) signaling pathway, a signaling pathway that plays a pivotal role in tumor suppression by restricting proliferation and promoting apoptosis. Along with WWC1 can synergistically induce the phosphorylation of LATS1 and LATS2 and can probably function in the regulation of the Hippo/SWH (Sav/Wts/Hpo) signaling pathway. May act as a membrane stabilizing protein. May inhibit PI3 kinase by binding to AGAP2 and impairing its stimulating activity. Suppresses cell proliferation and tumorigenesis by inhibiting the CUL4A-RBX1-DDB1-VprBP/DCAF1 E3 ubiquitin-protein ligase complex. This chain is Merlin (NF2), found in Homo sapiens (Human).